The primary structure comprises 641 residues: DEAD-box ATP-dependent RNA helicase 50 (641 aa).

Disordered regions lie at residues 86 to 115 (SMPS…IGNF), 129 to 189 (RSAH…LNSV), and 197 to 216 (DDLD…WGNI). The span at 150–159 (PSDESDEDGT) shows a compositional bias: acidic residues. The short motif at 240 to 268 (RSFKEIGCSDEILGALRSFGFPRPSHIQA) is the Q motif element. In terms of domain architecture, Helicase ATP-binding spans 271-452 (YRPVLEGKSC…VETFPDCELI (182 aa)). Residue 284 to 291 (DQSGSGKT) coordinates ATP. The short motif at 399–402 (DEVD) is the DEAD box element. A Helicase C-terminal domain is found at 487–641 (NKKSALVKII…GHPLHDVPCV (155 aa)).

The protein belongs to the DEAD box helicase family.

It catalyses the reaction ATP + H2O = ADP + phosphate + H(+). Its function is as follows. Probably involved in resistance to biotic and abiotic stresses. Confers tolerance to oxidative stress and mediates pathogenesis-related (PR) genes expression. Exhibits RNA-dependent ATPase and ATP-dependent RNA helicase activities in vitro. The protein is DEAD-box ATP-dependent RNA helicase 50 of Oryza sativa subsp. japonica (Rice).